The sequence spans 290 residues: Glycine--tRNA ligase alpha subunit (290 aa).

It belongs to the class-II aminoacyl-tRNA synthetase family. In terms of assembly, tetramer of two alpha and two beta subunits.

The protein resides in the cytoplasm. The enzyme catalyses tRNA(Gly) + glycine + ATP = glycyl-tRNA(Gly) + AMP + diphosphate. The protein is Glycine--tRNA ligase alpha subunit of Maridesulfovibrio salexigens (strain ATCC 14822 / DSM 2638 / NCIMB 8403 / VKM B-1763) (Desulfovibrio salexigens).